A 216-amino-acid chain; its full sequence is NKG2-D type II integral membrane protein (216 aa).

Residues 1–51 are Cytoplasmic-facing; it reads MGWIRGRRSRHSWEMSEFHNYNLDLKKSDFSTRWQKQRCPVVKSKCRENAS. Residues 52–72 traverse the membrane as a helical; Signal-anchor for type II membrane protein segment; sequence PFFFCCFIAVAMGIRFIIMVT. Residues 73 to 216 lie on the Extracellular side of the membrane; that stretch reads IWSAVFLNSL…NTYICMQRTV (144 aa). Cystine bridges form between Cys-96/Cys-105, Cys-99/Cys-110, Cys-127/Cys-211, and Cys-189/Cys-203. Residues 98 to 213 enclose the C-type lectin domain; that stretch reads PCPKNWICYK…STPNTYICMQ (116 aa). N-linked (GlcNAc...) asparagine glycans are attached at residues Asn-131, Asn-163, and Asn-202.

As to quaternary structure, homodimer; disulfide-linked. Heterohexamer composed of two subunits of KLRK1 and four subunits of HCST/DAP10. Interacts (via transmembrane domain) with HCST/DAP10 (via transmembrane domain); the interaction is required for KLRK1 NK cell surface and induces NK cell-mediated cytotoxicity. Does not interact with TYROBP. Interacts with CEACAM1; recruits PTPN6 that dephosphorylates VAV1. As to expression, expressed in natural killer (NK) cells, CD8(+) alpha-beta and gamma-delta T-cells. Expressed on essentially all CD56+CD3- NK cells from freshly isolated PBMC. Expressed in interferon-producing killer dendritic cells (IKDCs).

The protein resides in the cell membrane. Its function is as follows. Functions as an activating and costimulatory receptor involved in immunosurveillance upon binding to various cellular stress-inducible ligands displayed at the surface of autologous tumor cells and virus-infected cells. Provides both stimulatory and costimulatory innate immune responses on activated killer (NK) cells, leading to cytotoxic activity. Acts as a costimulatory receptor for T-cell receptor (TCR) in CD8(+) T-cell-mediated adaptive immune responses by amplifying T-cell activation. Stimulates perforin-mediated elimination of ligand-expressing tumor cells. Signaling involves calcium influx, culminating in the expression of TNF-alpha. Participates in NK cell-mediated bone marrow graft rejection. May play a regulatory role in differentiation and survival of NK cells. Binds to ligands belonging to various subfamilies of MHC class I-related glycoproteins including MICA, MICB, RAET1E, RAET1G, RAET1L/ULBP6, ULBP1, ULBP2, ULBP3 (ULBP2&gt;ULBP1&gt;ULBP3) and ULBP4. This is NKG2-D type II integral membrane protein (KLRK1) from Homo sapiens (Human).